The chain runs to 273 residues: Large ribosomal subunit protein uL2 (273 aa).

A disordered region spans residues 228 to 273; that stretch reads VDHPHGGGEGKTSGGRHPVTPWGFPTKGKKTRKNKRTSKFIVKKRK. A compositionally biased stretch (basic residues) spans 254 to 273; sequence KGKKTRKNKRTSKFIVKKRK.

This sequence belongs to the universal ribosomal protein uL2 family. Part of the 50S ribosomal subunit. Forms a bridge to the 30S subunit in the 70S ribosome.

Its function is as follows. One of the primary rRNA binding proteins. Required for association of the 30S and 50S subunits to form the 70S ribosome, for tRNA binding and peptide bond formation. It has been suggested to have peptidyltransferase activity; this is somewhat controversial. Makes several contacts with the 16S rRNA in the 70S ribosome. The polypeptide is Large ribosomal subunit protein uL2 (Rickettsia akari (strain Hartford)).